The primary structure comprises 92 residues: Long neurotoxin 1 (92 aa).

The N-terminal stretch at 1-21 is a signal peptide; sequence MKTLLLTLVVVTIVCLDLGYT. Disulfide bonds link Cys-24-Cys-42, Cys-35-Cys-63, Cys-67-Cys-79, and Cys-80-Cys-85.

It belongs to the three-finger toxin family. Long-chain subfamily. Type II alpha-neurotoxin sub-subfamily. As to expression, expressed by the venom gland.

The protein localises to the secreted. Functionally, binds with high affinity to muscular (alpha-1/CHRNA1) and neuronal (alpha-7/CHRNA7) nicotinic acetylcholine receptor (nAChR) and inhibits acetylcholine from binding to the receptor, thereby impairing neuromuscular and neuronal transmission. The sequence is that of Long neurotoxin 1 from Oxyuranus scutellatus scutellatus (Australian taipan).